Here is a 310-residue protein sequence, read N- to C-terminus: p-hydroxybenzoic acid efflux pump subunit AaeA (310 aa).

The chain crosses the membrane as a helical span at residues 12–32; it reads AITLVLVILAFIAIFRAWVYY.

It belongs to the membrane fusion protein (MFP) (TC 8.A.1) family.

It is found in the cell inner membrane. Functionally, forms an efflux pump with AaeB. In Escherichia fergusonii (strain ATCC 35469 / DSM 13698 / CCUG 18766 / IAM 14443 / JCM 21226 / LMG 7866 / NBRC 102419 / NCTC 12128 / CDC 0568-73), this protein is p-hydroxybenzoic acid efflux pump subunit AaeA.